We begin with the raw amino-acid sequence, 29 residues long: Cytolysin Uc-1 (29 aa).

Residues 1-15 (DEQTGSKGPNENLPS) are compositionally biased toward polar residues. Residues 1–29 (DEQTGSKGPNENLPSQKDLXAKASXLTEV) form a disordered region.

It localises to the secreted. It is found in the nematocyst. The protein resides in the target cell membrane. Functionally, pore-forming toxin that lyses bovine erythrocytes at nanomolar concentrations. Is devoid of enzymatic activity. Binds to monolayers and efficiently permeabilizes small lipid vesicles composed of sphingomyelin and cholesterol. The cytolytic activity is not prevented by cholesterol or sphingomyelin. This Urticina crassicornis (Mottled anemone) protein is Cytolysin Uc-1.